Consider the following 375-residue polypeptide: Lipid-A-disaccharide synthase (375 aa).

It belongs to the LpxB family.

The catalysed reaction is a lipid X + a UDP-2-N,3-O-bis[(3R)-3-hydroxyacyl]-alpha-D-glucosamine = a lipid A disaccharide + UDP + H(+). The protein operates within bacterial outer membrane biogenesis; LPS lipid A biosynthesis. Its function is as follows. Condensation of UDP-2,3-diacylglucosamine and 2,3-diacylglucosamine-1-phosphate to form lipid A disaccharide, a precursor of lipid A, a phosphorylated glycolipid that anchors the lipopolysaccharide to the outer membrane of the cell. The chain is Lipid-A-disaccharide synthase from Pseudomonas putida (strain ATCC 47054 / DSM 6125 / CFBP 8728 / NCIMB 11950 / KT2440).